A 360-amino-acid chain; its full sequence is Xanthohumol 4-O-methyltransferase (360 aa).

Asp227 serves as a coordination point for S-adenosyl-L-methionine. His266 acts as the Proton acceptor in catalysis.

This sequence belongs to the class I-like SAM-binding methyltransferase superfamily. Cation-independent O-methyltransferase family. Homodimer. Highly expressed in lupulin glands. Detected in cones, male flowers and roots.

The protein resides in the cytoplasm. The enzyme catalyses xanthohumol + S-adenosyl-L-methionine = 4-O-methylxanthohumol + S-adenosyl-L-homocysteine + H(+). The catalysed reaction is desmethylxanthohumol + S-adenosyl-L-methionine = xanthohumol + S-adenosyl-L-homocysteine + H(+). It catalyses the reaction isoliquiritigenin + S-adenosyl-L-methionine = 2'-O-methylisoliquiritigenin + S-adenosyl-L-homocysteine + H(+). It carries out the reaction trans-resveratrol + S-adenosyl-L-methionine = 3-methoxy-4',5-dihydroxy-trans-stilbene + S-adenosyl-L-homocysteine + H(+). Its pathway is secondary metabolite biosynthesis. Inhibited by S-adenosyl homocysteine. Involved in the biosynthesis of prenylated phenolics natural products which contribute to the bitter taste of beer and display broad biological activities. O-methyltransferase with a low substrate selectivity. Methylates chalconaringenin, desmethylxanthohumol, xanthohumol, isoliquiritigenin, butein, 2',4-dihydroxychalcone, resveratrol, genistein and guaiacol. Catalyzes the biosynthesis of 2',4'-dihydroxy-4,6'-dimethoxy-3'-prenylchalcone (4-O-methylxanthohumol). The sequence is that of Xanthohumol 4-O-methyltransferase from Humulus lupulus (European hop).